The primary structure comprises 559 residues: Cation/calcium exchanger 2 (559 aa).

A run of 13 helical transmembrane segments spans residues 10–30 (FGYL…GFFT), 86–106 (GFPI…FYLL), 131–151 (VAGV…ASLV), 167–187 (TVVG…SISL), 203–223 (ICFF…GKIN), 224–244 (FWGA…VVLS), 331–351 (WSKP…SFLW), 362–382 (AGVV…IAGA), 393–413 (WLLP…YISA), 416–436 (LVAL…ILGL), 480–500 (FALG…SIVI), 506–526 (LLES…VLFS), and 531–551 (LGGV…SLRI).

It belongs to the Ca(2+):cation antiporter (CaCA) (TC 2.A.19) family. Cation/calcium exchanger (CCX) subfamily.

It localises to the membrane. Functionally, membrane-localized H(+)-dependent K(+) and Na(+) transporter. This is Cation/calcium exchanger 2 (CCX2) from Arabidopsis thaliana (Mouse-ear cress).